The primary structure comprises 125 residues: MTGEPSLCIRGCGFFSTSQTKNLCSKCYNDFLKDESARYLATFNVNTKAAEEVTAQEATVLGSKGGCACKKKVGLLGFHCRCGHLFFASHRYPEEHSCPSDYKSAAIDVLAKQNPVVKGDKLFRL.

An A20-type zinc finger spans residues 2–36 (TGEPSLCIRGCGFFSTSQTKNLCSKCYNDFLKDES). Zn(2+)-binding residues include C8, C12, C24, C27, C80, C82, H96, and C98. The segment at 61 to 106 (LGSKGGCACKKKVGLLGFHCRCGHLFFASHRYPEEHSCPSDYKSAA) adopts an AN1-type; degenerate zinc-finger fold.

Functionally, may be involved in environmental stress response. The protein is Putative zinc finger A20 and AN1 domain-containing stress-associated protein 8 (SAP8) of Arabidopsis thaliana (Mouse-ear cress).